Consider the following 343-residue polypeptide: Phenylalanine--tRNA ligase alpha subunit (343 aa).

A Mg(2+)-binding site is contributed by glutamate 258.

This sequence belongs to the class-II aminoacyl-tRNA synthetase family. Phe-tRNA synthetase alpha subunit type 1 subfamily. In terms of assembly, tetramer of two alpha and two beta subunits. Requires Mg(2+) as cofactor.

Its subcellular location is the cytoplasm. It catalyses the reaction tRNA(Phe) + L-phenylalanine + ATP = L-phenylalanyl-tRNA(Phe) + AMP + diphosphate + H(+). The protein is Phenylalanine--tRNA ligase alpha subunit of Symbiobacterium thermophilum (strain DSM 24528 / JCM 14929 / IAM 14863 / T).